Reading from the N-terminus, the 116-residue chain is Large ribosomal subunit protein bL20c (116 aa).

It belongs to the bacterial ribosomal protein bL20 family.

It localises to the plastid. It is found in the chloroplast. Binds directly to 23S ribosomal RNA and is necessary for the in vitro assembly process of the 50S ribosomal subunit. It is not involved in the protein synthesizing functions of that subunit. In Marchantia polymorpha (Common liverwort), this protein is Large ribosomal subunit protein bL20c (rpl20).